A 247-amino-acid polypeptide reads, in one-letter code: Segregation and condensation protein A (247 aa).

It belongs to the ScpA family. Component of a cohesin-like complex composed of ScpA, ScpB and the Smc homodimer, in which ScpA and ScpB bind to the head domain of Smc. The presence of the three proteins is required for the association of the complex with DNA.

The protein localises to the cytoplasm. Participates in chromosomal partition during cell division. May act via the formation of a condensin-like complex containing Smc and ScpB that pull DNA away from mid-cell into both cell halves. This is Segregation and condensation protein A from Mycoplasma mobile (strain ATCC 43663 / 163K / NCTC 11711) (Mesomycoplasma mobile).